Reading from the N-terminus, the 61-residue chain is Small ribosomal subunit protein uS14 (61 aa).

Cys24, Cys27, Cys40, and Cys43 together coordinate Zn(2+).

The protein belongs to the universal ribosomal protein uS14 family. Zinc-binding uS14 subfamily. Part of the 30S ribosomal subunit. Contacts proteins S3 and S10. Requires Zn(2+) as cofactor.

In terms of biological role, binds 16S rRNA, required for the assembly of 30S particles and may also be responsible for determining the conformation of the 16S rRNA at the A site. This chain is Small ribosomal subunit protein uS14, found in Nitratidesulfovibrio vulgaris (strain DSM 19637 / Miyazaki F) (Desulfovibrio vulgaris).